Here is a 117-residue protein sequence, read N- to C-terminus: Huntingtin-interacting protein M (117 aa).

Composition is skewed to basic and acidic residues over residues 1-11 and 83-97; these read MSEKKSQEKPC and QDRE…EPSR. Disordered regions lie at residues 1-25 and 74-117; these read MSEK…SRPE and NINN…RRNG.

May interact with the N-terminus of HD.

The sequence is that of Huntingtin-interacting protein M from Mus musculus (Mouse).